The sequence spans 390 residues: Lipid-A-disaccharide synthase (390 aa).

The protein belongs to the LpxB family.

It catalyses the reaction a lipid X + a UDP-2-N,3-O-bis[(3R)-3-hydroxyacyl]-alpha-D-glucosamine = a lipid A disaccharide + UDP + H(+). The protein operates within bacterial outer membrane biogenesis; LPS lipid A biosynthesis. Functionally, condensation of UDP-2,3-diacylglucosamine and 2,3-diacylglucosamine-1-phosphate to form lipid A disaccharide, a precursor of lipid A, a phosphorylated glycolipid that anchors the lipopolysaccharide to the outer membrane of the cell. The chain is Lipid-A-disaccharide synthase from Haemophilus ducreyi (strain 35000HP / ATCC 700724).